The chain runs to 1849 residues: Brefeldin A-inhibited guanine nucleotide-exchange protein 1 (1849 aa).

The segment at 2–224 (YEGKKTKNMF…QEAKQMEKER (223 aa)) is DCB; DCB:DCB domain and DCB:HUS domain interaction. Over residues 46–58 (AETEKQSPPHGEA) the composition is skewed to basic and acidic residues. Disordered regions lie at residues 46-65 (AETEKQSPPHGEAKAGSSTL), 216-248 (EAKQMEKERHRQHHHLLQSPVSHHEPESPQLRY), 267-302 (LHTNDVDKSLQDDTEPENGSDISSAENEQTEADQAT), and 378-413 (TPISVAYTPSLPDDRLSVSSNDTQESGNSSGPSPGA). Residue Ser-52 is modified to Phosphoserine. Basic and acidic residues predominate over residues 267 to 277 (LHTNDVDKSLQ). A phosphoserine mark is found at Ser-286, Ser-289, Ser-290, Ser-397, and Ser-410. Over residues 394–409 (SVSSNDTQESGNSSGP) the composition is skewed to polar residues. The tract at residues 557–577 (ADAQSVVDIYVNYDCDLNAAN) is HUS; DCB:HUS domain interaction. Positions 709 to 840 (FNKKPKRGIQ…IIMLTTDLHS (132 aa)) constitute an SEC7 domain. Residues 711-715 (KKPKR) carry the Nuclear localization signal (NLS) motif. Ser-1079 carries the post-translational modification Phosphoserine. The disordered stretch occupies residues 1543-1562 (RPNSGETAPPPPSPVSEKPL). Residues Ser-1566 and Ser-1569 each carry the phosphoserine modification.

In terms of assembly, homodimer. Interacts with ARFGEF2/BIG2; both proteins are probably part of the same or very similar macromolecular complexes. Interacts with FKBP2. Interacts with MYO9B. Interacts with PRKAR1A and PRKAR2A. Interacts with PPP1CC. Interacts with NCL, FBL, NUP62 and U3 small nucleolar RNA. Interacts with DPY30. Interacts with PDE3A. Interacts with KANK1. Interacts with TBC1D22A and TBC1D22B. Interacts (via N-terminus) with ARL1. Phosphorylated. In vitro phosphorylated by PKA reducing its GEF activity and dephosphorylated by phosphatase PP1. Expressed in placenta, lung, heart, brain, kidney and pancreas.

It is found in the cytoplasm. It localises to the perinuclear region. The protein resides in the golgi apparatus. Its subcellular location is the trans-Golgi network membrane. The protein localises to the nucleus. It is found in the nucleolus. It localises to the nucleus matrix. With respect to regulation, inhibited by brefeldin A. Its function is as follows. Promotes guanine-nucleotide exchange on ARF1 and ARF3. Promotes the activation of ARF1/ARF3 through replacement of GDP with GTP. Involved in vesicular trafficking. Required for the maintenance of Golgi structure; the function may be independent of its GEF activity. Required for the maturation of integrin beta-1 in the Golgi. Involved in the establishment and persistence of cell polarity during directed cell movement in wound healing. Proposed to act as A kinase-anchoring protein (AKAP) and may mediate crosstalk between Arf and PKA pathways. Inhibits GAP activity of MYO9B probably through competitive RhoA binding. The function in the nucleus remains to be determined. The protein is Brefeldin A-inhibited guanine nucleotide-exchange protein 1 (ARFGEF1) of Homo sapiens (Human).